Consider the following 28-residue polypeptide: Small integral membrane protein 47 (28 aa).

A helical transmembrane segment spans residues 7–24 (VTLAMALFTILTSIYFFN).

It is found in the membrane. The sequence is that of Small integral membrane protein 47 from Homo sapiens (Human).